Reading from the N-terminus, the 316-residue chain is Probable thioesterase lcsE (316 aa).

It belongs to the AMT4 thioesterase family.

It participates in secondary metabolite biosynthesis. In terms of biological role, probable thioesterase; part of the gene cluster that mediates the biosynthesis of the lipopeptide antibiotics leucinostatins that show extensive biological activities, including antimalarial, antiviral, antibacterial, antifungal, and antitumor activities, as well as phytotoxic. Leucinostatin A contains nine amino acid residues, including the unusual amino acid 4-methyl-L-proline (MePro), 2-amino-6-hydroxy-4-methyl-8-oxodecanoic acid (AHyMeOA), 3-hydroxyleucine (HyLeu), alpha-aminoisobutyric acid (AIB), beta-Ala, a 4-methylhex-2-enoic acid at the N-terminus as well as a N1,N1-dimethylpropane-1,2-diamine (DPD) at the C-terminus. The biosynthesis of leucinostatins is probably initiated with the assembly of 4-methylhex-2-enoic acid by a reducing PKS. Two reducing polyketide synthases, lcsB and lcsC, have been identified in the cluster and it is not clear which is the one that assembles 4-methylhex-2-enoic acid since both contain KS, AT, DH, cMT, ER, KR and ACP domains. The polyketide residue might be transferred to the NRPS lcsA, mediated by two additional enzymes, the acyl-CoA ligase lcsD and the thioesterase lcsE. The linear polyketide carboxylic acid, which is released from PKS, is converted to a CoA thioester by lcsD, and then lcsE hydrolyzes the thiol bond and shuttles the polyketide intermediate to lcsA. The C domain of the first module catalyzed the condensation of 4-methylhex-2-enoic acid and MePro carried by domain A1, followed by successive condensations of nine amino acids to trigger the elongation of the linear peptide. A5 and A6 domains of lcsA are proposed to incorporate leucine, A2 AHyMeOA, and A3 incorporates HyLeu. A4, A7 and A8 incorporate AIB. The AHyMeOA in leucinostatin A activated by the A2 might be produced by the second PKS (lcsB or lcsC) present within the cluster. The MePro is probably produced via leucine cyclization and may originate from a separate pathway, independent of the cluster. Another nonproteinogenic amino acid, beta-Ala, could be produced by an aspartic acid decarboxylase also localized outside of the cluster. Two candidates are VFPBJ_01400 and VFPBJ_10476. The final peptide scaffold may be released by the NAD(P)H-dependent thioester reductase (TE) at the C-terminal region of lcsA. Transamination of the lcsA product by the transaminase lcsP may produce DPD at the C-terminus. Further hydroxylation steps performed alternatively by the cytochrome P450 monooxygenases lcsI, lcsK and lcsN then yield the non-methylated leucinostatins precursor. It is also possible that leucines can be hydroxylated prior to their incorporation into the peptide. Varying extents of methylation then lead to the formation of leucinostatins A and B. The polypeptide is Probable thioesterase lcsE (Purpureocillium lilacinum (Paecilomyces lilacinus)).